The primary structure comprises 189 residues: Large ribosomal subunit protein uL13 (189 aa).

It belongs to the universal ribosomal protein uL13 family.

This Salmo trutta (Brown trout) protein is Large ribosomal subunit protein uL13 (rpl13a).